Here is a 549-residue protein sequence, read N- to C-terminus: Glucose-6-phosphate isomerase (549 aa).

The active-site Proton donor is glutamate 353. Catalysis depends on residues histidine 384 and lysine 513.

It belongs to the GPI family.

Its subcellular location is the cytoplasm. The catalysed reaction is alpha-D-glucose 6-phosphate = beta-D-fructose 6-phosphate. It participates in carbohydrate biosynthesis; gluconeogenesis. Its pathway is carbohydrate degradation; glycolysis; D-glyceraldehyde 3-phosphate and glycerone phosphate from D-glucose: step 2/4. In terms of biological role, catalyzes the reversible isomerization of glucose-6-phosphate to fructose-6-phosphate. The protein is Glucose-6-phosphate isomerase of Brucella abortus (strain S19).